A 572-amino-acid chain; its full sequence is Hemagglutinin-neuraminidase (572 aa).

Residues 1-31 (MEYWKHTNHGKDAGNELETSMATHGNKLTNK) lie on the Intravirion side of the membrane. The helical transmembrane segment at 32-52 (IIYILWTIILVLLSIVFIIVL) threads the bilayer. The Virion surface segment spans residues 53–572 (INSIKSEKAH…FKTEIPKSCS (520 aa)). Intrachain disulfides connect Cys190-Cys214 and Cys256-Cys269. The segment at 252–257 (NRKSCS) is involved in neuraminidase activity. Residues Asn308 and Asn351 are each glycosylated (N-linked (GlcNAc...) asparagine; by host). 2 cysteine pairs are disulfide-bonded: Cys355–Cys469 and Cys463–Cys473. Residue Asn523 is glycosylated (N-linked (GlcNAc...) asparagine; by host). A disulfide bond links Cys535 and Cys544.

It belongs to the paramyxoviruses hemagglutinin-neuraminidase family. Homotetramer; composed of disulfide-linked homodimers. Interacts with F protein trimer.

The protein resides in the virion membrane. It is found in the host cell membrane. It catalyses the reaction Hydrolysis of alpha-(2-&gt;3)-, alpha-(2-&gt;6)-, alpha-(2-&gt;8)- glycosidic linkages of terminal sialic acid residues in oligosaccharides, glycoproteins, glycolipids, colominic acid and synthetic substrates.. Its function is as follows. Attaches the virus to sialic acid-containing cell receptors and thereby initiating infection. Binding of HN protein to the receptor induces a conformational change that allows the F protein to trigger virion/cell membranes fusion. Neuraminidase activity ensures the efficient spread of the virus by dissociating the mature virions from the neuraminic acid containing glycoproteins. The chain is Hemagglutinin-neuraminidase (HN) from Homo sapiens (Human).